The primary structure comprises 98 residues: NADH-ubiquinone oxidoreductase chain 4L (98 aa).

Helical transmembrane passes span 1 to 21 (MPLI…GMLV), 29 to 49 (SLLC…LMTL), and 58 to 78 (IMPI…LALL).

The protein belongs to the complex I subunit 4L family. As to quaternary structure, core subunit of respiratory chain NADH dehydrogenase (Complex I) which is composed of 45 different subunits.

The protein localises to the mitochondrion inner membrane. It carries out the reaction a ubiquinone + NADH + 5 H(+)(in) = a ubiquinol + NAD(+) + 4 H(+)(out). Functionally, core subunit of the mitochondrial membrane respiratory chain NADH dehydrogenase (Complex I) which catalyzes electron transfer from NADH through the respiratory chain, using ubiquinone as an electron acceptor. Part of the enzyme membrane arm which is embedded in the lipid bilayer and involved in proton translocation. This is NADH-ubiquinone oxidoreductase chain 4L (MT-ND4L) from Pongo abelii (Sumatran orangutan).